A 322-amino-acid chain; its full sequence is MESSTAFYDYHDKLSLLCENNVIFFSTISTIVLYSLVFLLSLVGNSLVLWVLVKYENLESLTNIFILNLCLSDLMFSCLLPVLISAQWSWFLGDFFCKFFNMIFGISLYSSIFFLTIMTIHRYLSVVSPISTLGIHTLRCRVLVTSCVWAASILFSIPDAVFHKVISLNCKYSEHHGFLASVYQHNIFFLLSMGIILFCYVQILRTLFRTRSRQRHRTVRLIFTVVVAYFLSWAPYNLTLFLKTGIIQQSCESLQQLDIAMIICRHLAFSHCCFNPVLYVFVGIKFRRHLKHLFQQVWLCRKTSSTVPCSPGTFTYEGPSFY.

Residues 1-27 (MESSTAFYDYHDKLSLLCENNVIFFST) lie on the Extracellular side of the membrane. A helical membrane pass occupies residues 28 to 55 (ISTIVLYSLVFLLSLVGNSLVLWVLVKY). The Cytoplasmic segment spans residues 56–65 (ENLESLTNIF). A helical membrane pass occupies residues 66 to 85 (ILNLCLSDLMFSCLLPVLIS). The Extracellular segment spans residues 86–98 (AQWSWFLGDFFCK). A disulfide bridge connects residues cysteine 97 and cysteine 170. A helical membrane pass occupies residues 99–120 (FFNMIFGISLYSSIFFLTIMTI). At 121-137 (HRYLSVVSPISTLGIHT) the chain is on the cytoplasmic side. Residues 138–162 (LRCRVLVTSCVWAASILFSIPDAVF) form a helical membrane-spanning segment. At 163–185 (HKVISLNCKYSEHHGFLASVYQH) the chain is on the extracellular side. A helical transmembrane segment spans residues 186–204 (NIFFLLSMGIILFCYVQIL). Residues 205–220 (RTLFRTRSRQRHRTVR) lie on the Cytoplasmic side of the membrane. A helical membrane pass occupies residues 221–243 (LIFTVVVAYFLSWAPYNLTLFLK). Residues 244-259 (TGIIQQSCESLQQLDI) lie on the Extracellular side of the membrane. A helical membrane pass occupies residues 260–283 (AMIICRHLAFSHCCFNPVLYVFVG). Over 284–322 (IKFRRHLKHLFQQVWLCRKTSSTVPCSPGTFTYEGPSFY) the chain is Cytoplasmic.

This sequence belongs to the G-protein coupled receptor 1 family. Expressed by dendritic cells from the thymus, slpeen, subcutaneous lymph nodes and mesenteric lymph nodes.

It localises to the cell membrane. Functionally, receptor for chemokines SCYC1 and SCYC2. Subsequently transduces a signal by increasing the intracellular calcium ions level. Receptor for XCL1/Lymphotactin. In Mus musculus (Mouse), this protein is Chemokine XC receptor 1 (Xcr1).